A 377-amino-acid chain; its full sequence is tRNA pseudouridine synthase Pus10 (377 aa).

The active-site Nucleophile is Asp206. Residues Tyr270 and Tyr339 each coordinate substrate.

Belongs to the pseudouridine synthase Pus10 family.

It catalyses the reaction uridine(54) in tRNA = pseudouridine(54) in tRNA. The enzyme catalyses uridine(55) in tRNA = pseudouridine(55) in tRNA. In terms of biological role, responsible for synthesis of pseudouridine from uracil-54 and uracil-55 in the psi GC loop of transfer RNAs. The polypeptide is tRNA pseudouridine synthase Pus10 (Picrophilus torridus (strain ATCC 700027 / DSM 9790 / JCM 10055 / NBRC 100828 / KAW 2/3)).